The following is a 355-amino-acid chain: Erythronate-4-phosphate dehydrogenase (355 aa).

Substrate contacts are provided by serine 45 and threonine 66. Residue aspartate 146 coordinates NAD(+). Residue arginine 206 is part of the active site. Aspartate 229 provides a ligand contact to NAD(+). Glutamate 234 is a catalytic residue. Histidine 251 functions as the Proton donor in the catalytic mechanism. Glycine 254 is a binding site for NAD(+). Tyrosine 255 is a substrate binding site.

It belongs to the D-isomer specific 2-hydroxyacid dehydrogenase family. PdxB subfamily. As to quaternary structure, homodimer.

Its subcellular location is the cytoplasm. The enzyme catalyses 4-phospho-D-erythronate + NAD(+) = (R)-3-hydroxy-2-oxo-4-phosphooxybutanoate + NADH + H(+). Its pathway is cofactor biosynthesis; pyridoxine 5'-phosphate biosynthesis; pyridoxine 5'-phosphate from D-erythrose 4-phosphate: step 2/5. Its function is as follows. Catalyzes the oxidation of erythronate-4-phosphate to 3-hydroxy-2-oxo-4-phosphonooxybutanoate. In Acinetobacter baylyi (strain ATCC 33305 / BD413 / ADP1), this protein is Erythronate-4-phosphate dehydrogenase.